A 195-amino-acid polypeptide reads, in one-letter code: Imidazoleglycerol-phosphate dehydratase (195 aa).

Belongs to the imidazoleglycerol-phosphate dehydratase family.

It localises to the cytoplasm. It catalyses the reaction D-erythro-1-(imidazol-4-yl)glycerol 3-phosphate = 3-(imidazol-4-yl)-2-oxopropyl phosphate + H2O. The protein operates within amino-acid biosynthesis; L-histidine biosynthesis; L-histidine from 5-phospho-alpha-D-ribose 1-diphosphate: step 6/9. In Cereibacter sphaeroides (strain ATCC 17029 / ATH 2.4.9) (Rhodobacter sphaeroides), this protein is Imidazoleglycerol-phosphate dehydratase.